The primary structure comprises 182 residues: Lipid A acyltransferase PagP (182 aa).

The signal sequence occupies residues 1-21 (MTQYFRALAFFLLLVPATAMA). A lipid anchor (N-palmitoyl cysteine) is attached at cysteine 22. The S-diacylglycerol cysteine moiety is linked to residue cysteine 22. Active-site residues include histidine 55, aspartate 98, and serine 99.

Belongs to the lipid A palmitoyltransferase family. As to quaternary structure, homodimer.

It localises to the cell outer membrane. The catalysed reaction is a lipid A + a 1,2-diacyl-sn-glycero-3-phosphocholine = a hepta-acyl lipid A + a 2-acyl-sn-glycero-3-phosphocholine. It carries out the reaction a lipid IVA + a 1,2-diacyl-sn-glycero-3-phosphocholine = a lipid IVB + a 2-acyl-sn-glycero-3-phosphocholine. It catalyses the reaction a lipid IIA + a 1,2-diacyl-sn-glycero-3-phosphocholine = a lipid IIB + a 2-acyl-sn-glycero-3-phosphocholine. Its function is as follows. Transfers a fatty acid residue from the sn-1 position of a phospholipid to the N-linked hydroxyfatty acid chain on the proximal unit of lipid A or its precursors. Required for resistance to cationic antimicrobial peptides (CAMPs). Modifications of lipid A with an acyl chain to evade host immune defenses by resisting antibody-mediated complement lysis during respiratory infection. The protein is Lipid A acyltransferase PagP of Bordetella bronchiseptica (strain ATCC BAA-588 / NCTC 13252 / RB50) (Alcaligenes bronchisepticus).